We begin with the raw amino-acid sequence, 440 residues long: MALIKLLLASLAITSVCGMYSKKDDVVELTEANFQSKVINSDDIWIVEFYAPWCGHCKSLVPEYKKAASALKGVAKVGAVDMTQHQSVGGPYNVQGFPTLKIFGADKKKPTDYNGQRTAQAIADSVLAEAKKAVSARLGGKSSGSSSSGSGSGSGKRGGGGSGNEVVELTDANFEDLVLNSKDIWLVEFFAPWCGHCKSLEPQWKAAASELKGKVRLGALDATVHTVVANKFAIRGFPTIKYFAPGSDVSDAQDYDGGRQSSDIVAWASARAQENMPAPEVFEGINQQVVEDACKEKQLCIFAFLPHILDCQSECRNNYLAMLKEQSEKFKKNLWGWIWVEGAAQPALEESFEVGGFGYPAMTALNFRKNKYAVLKGSFGKDGIHEFLRDLSYGKGRTSSLRGDGFPKIQKTEKWDGKDGALPAEDDIDLSDIDLDKTEL.

A signal peptide spans M1–G18. Thioredoxin domains are found at residues M19 to K131 and L127 to Q273. Residues C54 and C57 each act as nucleophile in the active site. A disulfide bridge connects residues C54 and C57. Residues L138–N164 are disordered. A compositionally biased stretch (low complexity) spans G139–G149. A compositionally biased stretch (gly residues) spans S150–G163. Active-site nucleophile residues include C194 and C197. C194 and C197 are oxidised to a cystine. The disordered stretch occupies residues D404–D426. Residues Q410–D419 show a composition bias toward basic and acidic residues. The short motif at K437–L440 is the Prevents secretion from ER element.

This sequence belongs to the protein disulfide isomerase family.

Its subcellular location is the endoplasmic reticulum lumen. It carries out the reaction Catalyzes the rearrangement of -S-S- bonds in proteins.. May function as a chaperone that inhibits aggregation of misfolded proteins. May negatively regulate the unfolded protein response (UPR) through binding to UPR sensors. The sequence is that of Protein disulfide-isomerase A6 homolog from Caenorhabditis elegans.